The sequence spans 235 residues: tRNA (guanine-N(7)-)-methyltransferase (235 aa).

S-adenosyl-L-methionine contacts are provided by residues Gly60, 83–84 (EI), 116–117 (NA), and Leu136. The active site involves Asp139. 214-216 (SEE) is a binding site for S-adenosyl-L-methionine.

This sequence belongs to the class I-like SAM-binding methyltransferase superfamily. TrmB family.

It localises to the nucleus. The enzyme catalyses guanosine(46) in tRNA + S-adenosyl-L-methionine = N(7)-methylguanosine(46) in tRNA + S-adenosyl-L-homocysteine. Its pathway is tRNA modification; N(7)-methylguanine-tRNA biosynthesis. In terms of biological role, catalyzes the formation of N(7)-methylguanine at position 46 (m7G46) in tRNA. This chain is tRNA (guanine-N(7)-)-methyltransferase, found in Anopheles gambiae (African malaria mosquito).